The chain runs to 340 residues: MAASSSEISEMKGVEESPEVPGEGPGHSEAETGPPQVLAGVPDQPEALQPGPDTTAALVDSGPKAELAPETTETPAGASETAQATDLSLSPGGESKANCSPEDLCQETVSKPEVSKETTADQGSRLESAAPPEPAPEPAPQPDPQPDSQPTPKPALQPELPTQEDPTPEILSESVGEKQENGAVVPLQAGDGEEGPAPEPHSPPSKKSPPANGAPPRVLQQLVEEDRMGRAHSGHPGSPRGSLSRHPSSQLAGPGVEGGEGTQKPRDYIILAILSCFCPMWPVNIVAFAYAVMSRNSLQQGDVDGAQRLGRVAKLLSIVALVGGVLIIIASCVINLGVYK.

The tract at residues 1–261 (MAASSSEISE…AGPGVEGGEG (261 aa)) is disordered. Topologically, residues 1–268 (MAASSSEISE…GEGTQKPRDY (268 aa)) are cytoplasmic. Position 28 is a phosphoserine (Ser-28). Thr-74 carries the phosphothreonine modification. Pro residues-rich tracts occupy residues 131 to 155 (PPEP…PKPA) and 197 to 207 (APEPHSPPSKK). Ser-238 carries the post-translational modification Phosphoserine. Arg-240 bears the Omega-N-methylarginine mark. Phosphoserine is present on residues Ser-248 and Ser-249. Positions 269–289 (IILAILSCFCPMWPVNIVAFA) form an intramembrane region, helical. At 290 to 317 (YAVMSRNSLQQGDVDGAQRLGRVAKLLS) the chain is on the cytoplasmic side. The chain crosses the membrane as a helical span at residues 318–338 (IVALVGGVLIIIASCVINLGV). Residues 339 to 340 (YK) are Extracellular-facing.

This sequence belongs to the CD225/Dispanin family. Component of the outer core of AMPAR complex. AMPAR complex consists of an inner core made of 4 pore-forming GluA/GRIA proteins (GRIA1, GRIA2, GRIA3 and GRIA4) and 4 major auxiliary subunits arranged in a twofold symmetry. One of the two pairs of distinct binding sites is occupied either by CNIH2, CNIH3 or CACNG2, CACNG3. The other harbors CACNG2, CACNG3, CACNG4, CACNG8 or GSG1L. This inner core of AMPAR complex is complemented by outer core constituents binding directly to the GluA/GRIA proteins at sites distinct from the interaction sites of the inner core constituents. Outer core constituents include at least PRRT1, PRRT2, CKAMP44/SHISA9, FRRS1L and NRN1. The proteins of the inner and outer core serve as a platform for other, more peripherally associated AMPAR constituents. Alone or in combination, these auxiliary subunits control the gating and pharmacology of the AMPAR complex and profoundly impact their biogenesis and protein processing. Interacts with intersectin 1/ITSN1. Interacts with SNARE complex components, including SNAP25, STX1A, SYT1 and SYT2; this interaction may inhibit SNARE complex formation.

The protein resides in the cell membrane. The protein localises to the presynaptic cell membrane. Its subcellular location is the synapse. It is found in the cell projection. It localises to the axon. The protein resides in the cytoplasmic vesicle. The protein localises to the secretory vesicle. Its subcellular location is the synaptic vesicle membrane. It is found in the postsynaptic density membrane. It localises to the dendritic spine. Its function is as follows. As a component of the outer core of AMPAR complex, may be involved in synaptic transmission in the central nervous system. In hippocampal neurons, in presynaptic terminals, plays an important role in the final steps of neurotransmitter release, possibly by regulating Ca(2+)-sensing. In the cerebellum, may inhibit SNARE complex formation and down-regulate short-term facilitation. The polypeptide is Proline-rich transmembrane protein 2 (PRRT2) (Pongo abelii (Sumatran orangutan)).